We begin with the raw amino-acid sequence, 270 residues long: Expansin-B10 (270 aa).

The N-terminal stretch at 1 to 31 is a signal peptide; sequence MAVNVRTMWSSMRAQVAMVVALVFLVRGAWC. An N-linked (GlcNAc...) asparagine glycan is attached at Asn-41. Residues 70 to 176 enclose the Expansin-like EG45 domain; the sequence is GGGCGYKDVN…RRVKCKYDSK (107 aa). 3 cysteine pairs are disulfide-bonded: Cys-73–Cys-101, Cys-104–Cys-171, and Cys-109–Cys-115. The 82-residue stretch at 188 to 269 folds into the Expansin-like CBD domain; it reads NYLALLVKYV…NWKANTAYTA (82 aa).

It belongs to the expansin family. Expansin B subfamily. Expressed in pollen.

It localises to the secreted. It is found in the cell wall. The protein resides in the membrane. Functionally, may aid fertilization by loosening the cell wall of the stigma and style, thereby facilitating penetration of the pollen tube. Acts selectively on grass cell walls, which are relatively poor in pectins and xyloglucans and rich in glucuronoarabinoxylans and (1-3),(1-4)-beta-D-glucans, when compared with cell walls of other angiosperms, including other monocots. This Zea mays (Maize) protein is Expansin-B10 (EXPB10).